Reading from the N-terminus, the 354-residue chain is MTELKNDRYLRALLRQPVDVTPVWMMRQAGRYLPEYKATRAQAGDFMSLCKNAELACEVTLQPLRRYPLDAAILFSDILTIPDAMGLGLYFEAGEGPRFTAPVTCKADVDKLPIPAPEDELGYVMNAVRTIRRELKGEVPLIGFSGSPWTLATYMVEGGSSKAFTVIKKMMYADPQALHLLLDKLAKSVTLYLNAQIKAGAQSVMIFDTWGGVLTGRDYQQFSLYYMHKIVDGLLRENDGRRVPVTLFTKGGGQWLEAMAETGCDALGLDWTTDIADARRRVGHKVALQGNMDPSMLYAPPARIEDEVATILAGFGQGEGHVFNLGHGIHQDVPPEHAGAFVEAVHRLSAQYHN.

Residues 27–31 (RQAGR), Asp77, Tyr154, Thr209, and His327 contribute to the substrate site.

It belongs to the uroporphyrinogen decarboxylase family. In terms of assembly, homodimer.

Its subcellular location is the cytoplasm. The enzyme catalyses uroporphyrinogen III + 4 H(+) = coproporphyrinogen III + 4 CO2. It functions in the pathway porphyrin-containing compound metabolism; protoporphyrin-IX biosynthesis; coproporphyrinogen-III from 5-aminolevulinate: step 4/4. In terms of biological role, catalyzes the decarboxylation of four acetate groups of uroporphyrinogen-III to yield coproporphyrinogen-III. This is Uroporphyrinogen decarboxylase from Salmonella schwarzengrund (strain CVM19633).